We begin with the raw amino-acid sequence, 231 residues long: ATP-dependent dethiobiotin synthetase BioD (231 aa).

An ATP-binding site is contributed by 13–18 (DVGKTV). Thr17 contacts Mg(2+). Lys38 is a catalytic residue. ATP is bound by residues Asp55, 116-119 (EGAG), and 176-177 (NR). Mg(2+) contacts are provided by Asp55 and Glu116.

This sequence belongs to the dethiobiotin synthetase family. In terms of assembly, homodimer. Requires Mg(2+) as cofactor.

It localises to the cytoplasm. It carries out the reaction (7R,8S)-7,8-diammoniononanoate + CO2 + ATP = (4R,5S)-dethiobiotin + ADP + phosphate + 3 H(+). It participates in cofactor biosynthesis; biotin biosynthesis; biotin from 7,8-diaminononanoate: step 1/2. Its function is as follows. Catalyzes a mechanistically unusual reaction, the ATP-dependent insertion of CO2 between the N7 and N8 nitrogen atoms of 7,8-diaminopelargonic acid (DAPA, also called 7,8-diammoniononanoate) to form a ureido ring. The protein is ATP-dependent dethiobiotin synthetase BioD of Vibrio cholerae serotype O1 (strain ATCC 39315 / El Tor Inaba N16961).